The following is a 206-amino-acid chain: GTP-binding protein YPTC5 (206 aa).

15 to 22 (GDSGVGKT) contacts GTP. The Effector region signature appears at 37-45 (YKATIGADF). GTP is bound by residues 63–67 (DTAGQ) and 125–128 (NKID). Residues Cys205 and Cys206 are each lipidated (S-geranylgeranyl cysteine).

It belongs to the small GTPase superfamily. Rab family.

The protein resides in the cell membrane. Its function is as follows. Protein transport. Probably involved in vesicular traffic. In Chlamydomonas reinhardtii (Chlamydomonas smithii), this protein is GTP-binding protein YPTC5 (YPTC5).